A 285-amino-acid chain; its full sequence is Flagellar filament core protein flaB2 (285 aa).

It belongs to the bacterial flagellin family. As to quaternary structure, the flagellum consists of an outer layer composed of two sheath proteins, flaA1 (44 kDa) and flaA2 (35 kDa) around a core that contains three proteins flaB1 (37 kDa), flaB2 (34 kDa) and flaB3 (32 kDa).

It localises to the periplasmic flagellum. The protein resides in the periplasm. In terms of biological role, component of the core of the flagella. The polypeptide is Flagellar filament core protein flaB2 (flaB2) (Brachyspira hyodysenteriae (Treponema hyodysenteriae)).